Here is a 518-residue protein sequence, read N- to C-terminus: Efflux pump terJ (518 aa).

The helical transmembrane segment at 43–63 (IAFIVVVCMAQLVSQAGLGQV) threads the bilayer. A glycan (N-linked (GlcNAc...) asparagine) is linked at asparagine 79. The next 12 membrane-spanning stretches (helical) occupy residues 82-102 (QLSW…LGAG), 112-132 (LLFT…AFAE), 135-155 (GPVF…FLLP), 177-197 (AFGS…ALAA), 204-224 (WGFW…IFWV), 244-264 (IAGC…LNMA), 272-292 (PYIY…GYIE), 311-331 (FVLA…FYGW), 339-359 (GISP…GFVA), 364-384 (GLIL…AAFC), 400-420 (WAQL…SFPA), and 439-459 (SLVA…GAIV). N-linked (GlcNAc...) asparagine glycosylation is present at asparagine 466. A helical membrane pass occupies residues 477 to 497 (AWYLGVGLAASGIILTMFFAL).

The protein belongs to the major facilitator superfamily.

The protein resides in the cell membrane. Functionally, efflux pump that might be required for efficient secretion of terrein or other secondary metabolies produced by the terrein genne cluster. This chain is Efflux pump terJ, found in Aspergillus terreus (strain NIH 2624 / FGSC A1156).